We begin with the raw amino-acid sequence, 262 residues long: Hydroxyethylthiazole kinase (262 aa).

M50 contacts substrate. 2 residues coordinate ATP: R125 and T171. G198 contributes to the substrate binding site.

This sequence belongs to the Thz kinase family. It depends on Mg(2+) as a cofactor.

It carries out the reaction 5-(2-hydroxyethyl)-4-methylthiazole + ATP = 4-methyl-5-(2-phosphooxyethyl)-thiazole + ADP + H(+). It functions in the pathway cofactor biosynthesis; thiamine diphosphate biosynthesis; 4-methyl-5-(2-phosphoethyl)-thiazole from 5-(2-hydroxyethyl)-4-methylthiazole: step 1/1. In terms of biological role, catalyzes the phosphorylation of the hydroxyl group of 4-methyl-5-beta-hydroxyethylthiazole (THZ). The sequence is that of Hydroxyethylthiazole kinase from Shigella flexneri serotype 5b (strain 8401).